Consider the following 86-residue polypeptide: Progonadoliberin-2 (86 aa).

A signal peptide spans 1–24 (MVSVARLVFMLGPLLCLGAQLSSS). Q25 carries the pyrrolidone carboxylic acid modification. G34 carries the post-translational modification Glycine amide.

It belongs to the GnRH family.

It localises to the secreted. Its function is as follows. Stimulates the secretion of gonadotropins. The sequence is that of Progonadoliberin-2 (gnrh2) from Oncorhynchus mykiss (Rainbow trout).